Here is a 245-residue protein sequence, read N- to C-terminus: Carbohydrate deacetylase (245 aa).

Mg(2+) is bound by residues His-61 and His-122.

It belongs to the YdjC deacetylase family. Mg(2+) serves as cofactor.

Probably catalyzes the deacetylation of acetylated carbohydrates an important step in the degradation of oligosaccharides. This is Carbohydrate deacetylase (celC) from Geobacillus stearothermophilus (Bacillus stearothermophilus).